A 382-amino-acid polypeptide reads, in one-letter code: Carbamoyl phosphate synthase small chain (382 aa).

The segment at 1–189 (MIKSALLVLE…GLPEAKSEDD (189 aa)) is CPSase. The L-glutamine site is built by Ser-47, Gly-241, and Gly-243. The Glutamine amidotransferase type-1 domain occupies 193–380 (HVVAYDFGAK…IELIEQYRQS (188 aa)). The active-site Nucleophile is the Cys-269. The L-glutamine site is built by Leu-270, Gln-273, Asn-311, Gly-313, and Phe-314. Catalysis depends on residues His-353 and Glu-355.

The protein belongs to the CarA family. In terms of assembly, composed of two chains; the small (or glutamine) chain promotes the hydrolysis of glutamine to ammonia, which is used by the large (or ammonia) chain to synthesize carbamoyl phosphate. Tetramer of heterodimers (alpha,beta)4.

The enzyme catalyses hydrogencarbonate + L-glutamine + 2 ATP + H2O = carbamoyl phosphate + L-glutamate + 2 ADP + phosphate + 2 H(+). It catalyses the reaction L-glutamine + H2O = L-glutamate + NH4(+). The protein operates within amino-acid biosynthesis; L-arginine biosynthesis; carbamoyl phosphate from bicarbonate: step 1/1. It participates in pyrimidine metabolism; UMP biosynthesis via de novo pathway; (S)-dihydroorotate from bicarbonate: step 1/3. In terms of biological role, small subunit of the glutamine-dependent carbamoyl phosphate synthetase (CPSase). CPSase catalyzes the formation of carbamoyl phosphate from the ammonia moiety of glutamine, carbonate, and phosphate donated by ATP, constituting the first step of 2 biosynthetic pathways, one leading to arginine and/or urea and the other to pyrimidine nucleotides. The small subunit (glutamine amidotransferase) binds and cleaves glutamine to supply the large subunit with the substrate ammonia. This is Carbamoyl phosphate synthase small chain from Salmonella typhimurium (strain LT2 / SGSC1412 / ATCC 700720).